Consider the following 311-residue polypeptide: DNA-directed RNA polymerase subunit alpha (311 aa).

Positions 1–228 are alpha N-terminal domain (alpha-NTD); sequence MQYQIERIDH…ELFQPLATVT (228 aa). The alpha C-terminal domain (alpha-CTD) stretch occupies residues 239–311; it reads PSPEAQIPLE…ISIPQSRTSV (73 aa).

The protein belongs to the RNA polymerase alpha chain family. In cyanobacteria the RNAP catalytic core is composed of 2 alpha, 1 beta, 1 beta', 1 gamma and 1 omega subunit. When a sigma factor is associated with the core the holoenzyme is formed, which can initiate transcription.

The enzyme catalyses RNA(n) + a ribonucleoside 5'-triphosphate = RNA(n+1) + diphosphate. DNA-dependent RNA polymerase catalyzes the transcription of DNA into RNA using the four ribonucleoside triphosphates as substrates. The protein is DNA-directed RNA polymerase subunit alpha of Prochlorococcus marinus (strain MIT 9312).